A 637-amino-acid polypeptide reads, in one-letter code: Proton myo-inositol cotransporter (637 aa).

Residues 1–65 are Cytoplasmic-facing; the sequence is MSRKASEDVE…AARRQFQRDE (65 aa). S6 bears the Phosphoserine mark. Residues 16 to 38 are disordered; sequence LSSLMGERRRRQPEPGAPGGERS. Phosphoserine occurs at positions 44 and 47. Residues 66–86 form a helical membrane-spanning segment; it reads TPAFVYAAAAFSALGGFLFGY. At 87 to 114 the chain is on the extracellular side; sequence DTGVVSGAMLLLRRQMRLGAMWQELLVS. Residues 115 to 135 form a helical membrane-spanning segment; the sequence is GAVGAAAVAALAGGALNGALG. At 136 to 137 the chain is on the cytoplasmic side; it reads RR. The chain crosses the membrane as a helical span at residues 138 to 158; the sequence is SAILLASALCTVGSAVLAAAA. The Extracellular portion of the chain corresponds to 159-167; sequence NKETLLAGR. Residues 168-188 form a helical membrane-spanning segment; it reads LVVGLGIGIASMTVPVYIAEV. Over 189 to 201 the chain is Cytoplasmic; sequence SPPNLRGRLVTIN. Residues 202-222 form a helical membrane-spanning segment; sequence TLFITGGQFFASVVDGAFSYL. Residues 223 to 228 are Extracellular-facing; it reads QKDGWR. The chain crosses the membrane as a helical span at residues 229-249; the sequence is YMLGLAAIPAVIQFLGFLFLP. Residues 250 to 313 are Cytoplasmic-facing; sequence ESPRWLIQKG…RMLSYPPTRR (64 aa). The chain crosses the membrane as a helical span at residues 314-334; it reads ALAVGCGLQMFQQLSGINTIM. The Extracellular segment spans residues 335 to 352; it reads YYSATILQMSGVEDDRLA. Residues 353-373 traverse the membrane as a helical segment; sequence IWLASITAFTNFIFTLVGVWL. Over 374–382 the chain is Cytoplasmic; the sequence is VEKVGRRKL. A helical transmembrane segment spans residues 383–403; that stretch reads TFGSLAGTTVALTILALGFLL. Topologically, residues 404 to 497 are extracellular; it reads SAQVSPRVTF…SFCPTPYSWT (94 aa). N-linked (GlcNAc...) asparagine glycans are attached at residues N422, N447, and N474. A helical membrane pass occupies residues 498-518; sequence ALVGLVLYLVFFAPGMGPMPW. At 519-538 the chain is on the cytoplasmic side; that stretch reads TVNSEIYPLWARSTGNACSA. Residues 539–559 form a helical membrane-spanning segment; the sequence is GINWIFNVLVSLTFLHTAEYL. The Extracellular portion of the chain corresponds to 560–562; the sequence is TYY. A helical transmembrane segment spans residues 563–583; that stretch reads GAFFLYAGFAAVGLLFVYGCL. Topologically, residues 584–637 are cytoplasmic; that stretch reads PETKGKKLEEIESLFDHRLCTCGTADSDEGRYIEYIRVKGSNYHLSDNDASDVE. Phosphoserine is present on residues S629 and S634.

It belongs to the major facilitator superfamily. Sugar transporter (TC 2.A.1.1) family.

The protein localises to the cell membrane. The enzyme catalyses myo-inositol(out) + H(+)(out) = myo-inositol(in) + H(+)(in). In terms of biological role, h(+)-myo-inositol cotransporter. Can also transport related stereoisomers. This Rattus norvegicus (Rat) protein is Proton myo-inositol cotransporter.